The primary structure comprises 669 residues: DNA ligase (669 aa).

NAD(+) contacts are provided by residues 35–39 (DSEYD), 84–85 (SL), and E114. The active-site N6-AMP-lysine intermediate is K116. Residues R137, E171, K287, and K311 each coordinate NAD(+). C405, C408, C423, and C428 together coordinate Zn(2+). Residues 591–669 (DSDSYFAGKT…EAQLLGELKK (79 aa)) enclose the BRCT domain.

It belongs to the NAD-dependent DNA ligase family. LigA subfamily. Requires Mg(2+) as cofactor. Mn(2+) is required as a cofactor.

The enzyme catalyses NAD(+) + (deoxyribonucleotide)n-3'-hydroxyl + 5'-phospho-(deoxyribonucleotide)m = (deoxyribonucleotide)n+m + AMP + beta-nicotinamide D-nucleotide.. DNA ligase that catalyzes the formation of phosphodiester linkages between 5'-phosphoryl and 3'-hydroxyl groups in double-stranded DNA using NAD as a coenzyme and as the energy source for the reaction. It is essential for DNA replication and repair of damaged DNA. This chain is DNA ligase, found in Bacillus velezensis (strain DSM 23117 / BGSC 10A6 / LMG 26770 / FZB42) (Bacillus amyloliquefaciens subsp. plantarum).